The chain runs to 187 residues: MKETKQEEMEVREDCESVDSNLEATVEEMESTKGTSEDLEQKLAEKTAQYEDIFSQFQRLQADFTNYKKRVEKEKGDIYLYANEKIALDLLNIIDNFERAIQSTEKTEENDSLLQGISLVYKQLLDTLTKHGVEEIEAMEKPFDMNLHYAVMQEESEGASNYVIDVLQKGYKIKDRILRPAMVKVSK.

Residues 1–15 are compositionally biased toward basic and acidic residues; that stretch reads MKETKQEEMEVREDC. A disordered region spans residues 1–40; the sequence is MKETKQEEMEVREDCESVDSNLEATVEEMESTKGTSEDLE.

Belongs to the GrpE family. As to quaternary structure, homodimer.

Its subcellular location is the cytoplasm. Functionally, participates actively in the response to hyperosmotic and heat shock by preventing the aggregation of stress-denatured proteins, in association with DnaK and GrpE. It is the nucleotide exchange factor for DnaK and may function as a thermosensor. Unfolded proteins bind initially to DnaJ; upon interaction with the DnaJ-bound protein, DnaK hydrolyzes its bound ATP, resulting in the formation of a stable complex. GrpE releases ADP from DnaK; ATP binding to DnaK triggers the release of the substrate protein, thus completing the reaction cycle. Several rounds of ATP-dependent interactions between DnaJ, DnaK and GrpE are required for fully efficient folding. This Alkaliphilus oremlandii (strain OhILAs) (Clostridium oremlandii (strain OhILAs)) protein is Protein GrpE.